A 137-amino-acid chain; its full sequence is Sporulation-specific cell division protein SsgB (137 aa).

This sequence belongs to the SsgA family. Interacts with SsgA. Interacts with FtsZ (via N-terminus).

The protein resides in the cell septum. In terms of biological role, involved in sporulation-specific cell division. Required for early stages of sporulation. Important in the process of growth cessation prior to sporulation-specific cell division. Recruits cell division protein FtsZ to the future septum sites and tethers the contractile ring structure (Z ring) to the cytoplasmic membrane during sporulation. Stimulates polymerization and filament length of FtsZ in vitro. This chain is Sporulation-specific cell division protein SsgB, found in Streptomyces coelicolor (strain ATCC BAA-471 / A3(2) / M145).